Consider the following 578-residue polypeptide: Arginine--tRNA ligase (578 aa).

The 'HIGH' region motif lies at proline 127–histidine 137.

Belongs to the class-I aminoacyl-tRNA synthetase family. As to quaternary structure, monomer.

The protein resides in the cytoplasm. It catalyses the reaction tRNA(Arg) + L-arginine + ATP = L-arginyl-tRNA(Arg) + AMP + diphosphate. The protein is Arginine--tRNA ligase of Pseudomonas entomophila (strain L48).